The primary structure comprises 413 residues: Glucose-1-phosphate adenylyltransferase (413 aa).

Alpha-D-glucose 1-phosphate is bound by residues Tyr102, Gly167, 182–183 (EK), and Ser200.

The protein belongs to the bacterial/plant glucose-1-phosphate adenylyltransferase family. As to quaternary structure, homotetramer.

It catalyses the reaction alpha-D-glucose 1-phosphate + ATP + H(+) = ADP-alpha-D-glucose + diphosphate. Its pathway is glycan biosynthesis; glycogen biosynthesis. Functionally, involved in the biosynthesis of ADP-glucose, a building block required for the elongation reactions to produce glycogen. Catalyzes the reaction between ATP and alpha-D-glucose 1-phosphate (G1P) to produce pyrophosphate and ADP-Glc. This is Glucose-1-phosphate adenylyltransferase from Deinococcus deserti (strain DSM 17065 / CIP 109153 / LMG 22923 / VCD115).